A 408-amino-acid polypeptide reads, in one-letter code: S-adenosylmethionine:tRNA ribosyltransferase-isomerase (408 aa).

This sequence belongs to the QueA family. In terms of assembly, monomer.

Its subcellular location is the cytoplasm. The enzyme catalyses 7-aminomethyl-7-carbaguanosine(34) in tRNA + S-adenosyl-L-methionine = epoxyqueuosine(34) in tRNA + adenine + L-methionine + 2 H(+). It participates in tRNA modification; tRNA-queuosine biosynthesis. Transfers and isomerizes the ribose moiety from AdoMet to the 7-aminomethyl group of 7-deazaguanine (preQ1-tRNA) to give epoxyqueuosine (oQ-tRNA). The sequence is that of S-adenosylmethionine:tRNA ribosyltransferase-isomerase from Trichormus variabilis (strain ATCC 29413 / PCC 7937) (Anabaena variabilis).